Consider the following 223-residue polypeptide: ATP-dependent dethiobiotin synthetase BioD (223 aa).

12 to 17 contributes to the ATP binding site; that stretch reads EIGKTH. Thr-16 is a binding site for Mg(2+). Lys-37 is a catalytic residue. Ser-41 contacts substrate. Residues Asp-52 and 118 to 121 each bind ATP; that span reads EGVG. Positions 52 and 118 each coordinate Mg(2+).

It belongs to the dethiobiotin synthetase family. In terms of assembly, homodimer. Requires Mg(2+) as cofactor.

It is found in the cytoplasm. The enzyme catalyses (7R,8S)-7,8-diammoniononanoate + CO2 + ATP = (4R,5S)-dethiobiotin + ADP + phosphate + 3 H(+). It participates in cofactor biosynthesis; biotin biosynthesis; biotin from 7,8-diaminononanoate: step 1/2. Catalyzes a mechanistically unusual reaction, the ATP-dependent insertion of CO2 between the N7 and N8 nitrogen atoms of 7,8-diaminopelargonic acid (DAPA, also called 7,8-diammoniononanoate) to form a ureido ring. This chain is ATP-dependent dethiobiotin synthetase BioD, found in Acidiphilium cryptum (strain JF-5).